Reading from the N-terminus, the 457-residue chain is MDSFKVVLEGPAPWGFRLQGGKDFNVPLSISRLTPGGKAAQAGVAVGDWVLNIDGENAGSLTHIEAQNKIRACGERLSLGLSRAQPVQSKPQKALTPPADPPRYTFAPSASLNKTARPFGAPPPTDSTLRQNGQLLRQPVPDASKQRLMEDTEDWRPRPGTGQSRSFRILAHLTGTEFMQDPDEEFMKKSSQVPRTEAPAPASTIPQESWPGPTTPSPTSRPPWAVDPAFAERYAPDKTSTVLTRHSQPATPTPLQNRTSIVQAAAGGGTGGGSNNGKTPVCHQCHKIIRGRYLVALGHAYHPEEFVCSQCGKVLEEGGFFEEKGAIFCPSCYDVRYAPNCAKCKKKITGEIMHALKMTWHVHCFTCAACKTPIRNRAFYMEEGAPYCERDYEKMFGTKCRGCDFKIDAGDRFLEALGFSWHDTCFVCAICQINLEGKTFYSKKDKPLCKSHAFSHV.

In terms of domain architecture, PDZ spans 1 to 85 (MDSFKVVLEG…RLSLGLSRAQ (85 aa)). Ser78 is subject to Phosphoserine. Disordered regions lie at residues 82–166 (SRAQ…QSRS) and 186–226 (FMKK…PWAV). The residue at position 96 (Thr96) is a Phosphothreonine. The residue at position 103 (Arg103) is an Asymmetric dimethylarginine. At Ser111 the chain carries Phosphoserine. Polar residues predominate over residues 126 to 135 (DSTLRQNGQL). A compositionally biased stretch (basic and acidic residues) spans 144–157 (SKQRLMEDTEDWRP). Position 247 is a phosphoserine (Ser247). LIM zinc-binding domains follow at residues 280-338 (PVCH…VRYA), 339-398 (PNCA…MFGT), and 399-457 (KCRG…FSHV).

As to quaternary structure, specifically binds via its LIM zinc-binding 3 domain (LIM 3) domain to endocytic codes of INSR, but not with those of IGF1R, LDLR, TFRC, or EGFR. Interacts with various PKC isoforms through the LIM zinc-binding domains. Binds to RET in a phosphorylation-independent manner via its LIM zinc-binding domain 2 (LIM 2). Probably part of a complex with SHC and the RET dimer. Interacts with TPM2, TBX4 and TBX5.

The protein localises to the cytoplasm. It localises to the cytoskeleton. May function as a scaffold on which the coordinated assembly of proteins can occur. May play a role as an adapter that, via its PDZ domain, localizes LIM-binding proteins to actin filaments of both skeletal muscle and nonmuscle tissues. Involved in both of the two fundamental mechanisms of bone formation, direct bone formation (e.g. embryonic flat bones mandible and cranium), and endochondral bone formation (e.g. embryonic long bone development). Plays a role during fracture repair. Involved in BMP6 signaling pathway. The polypeptide is PDZ and LIM domain protein 7 (Pdlim7) (Mus musculus (Mouse)).